The primary structure comprises 195 residues: Magnetosome membrane protein 22 (195 aa).

Residues 1–28 (MAAQTAASEAPAPAAAPADSPTTAGPTP) show a composition bias toward low complexity. Positions 1–31 (MAAQTAASEAPAPAAAPADSPTTAGPTPDSV) are disordered. Transmembrane regions (helical) follow at residues 45 to 65 (VLAA…AAVV), 90 to 110 (SVIA…AVAV), and 115 to 135 (LIPG…AGAT).

It is found in the magnetosome membrane. The protein is Magnetosome membrane protein 22 of Magnetospirillum gryphiswaldense (strain DSM 6361 / JCM 21280 / NBRC 15271 / MSR-1).